A 286-amino-acid chain; its full sequence is UPF0173 metal-dependent hydrolase RALTA_A1748 (286 aa).

This sequence belongs to the UPF0173 family.

The chain is UPF0173 metal-dependent hydrolase RALTA_A1748 from Cupriavidus taiwanensis (strain DSM 17343 / BCRC 17206 / CCUG 44338 / CIP 107171 / LMG 19424 / R1) (Ralstonia taiwanensis (strain LMG 19424)).